Consider the following 44-residue polypeptide: Protein PsbN (44 aa).

Residues 6–26 (FFFTIFVWFLLISVTGYSIYV) form a helical membrane-spanning segment.

This sequence belongs to the PsbN family.

The protein localises to the plastid. The protein resides in the chloroplast thylakoid membrane. Functionally, may play a role in photosystem I and II biogenesis. This chain is Protein PsbN, found in Bigelowiella natans (Pedinomonas minutissima).